We begin with the raw amino-acid sequence, 268 residues long: Tryptophan synthase alpha chain (268 aa).

Active-site proton acceptor residues include Glu49 and Asp60.

It belongs to the TrpA family. Tetramer of two alpha and two beta chains.

The enzyme catalyses (1S,2R)-1-C-(indol-3-yl)glycerol 3-phosphate + L-serine = D-glyceraldehyde 3-phosphate + L-tryptophan + H2O. The protein operates within amino-acid biosynthesis; L-tryptophan biosynthesis; L-tryptophan from chorismate: step 5/5. In terms of biological role, the alpha subunit is responsible for the aldol cleavage of indoleglycerol phosphate to indole and glyceraldehyde 3-phosphate. This chain is Tryptophan synthase alpha chain, found in Vibrio cholerae serotype O1 (strain ATCC 39541 / Classical Ogawa 395 / O395).